The primary structure comprises 200 residues: Protein OPI10 homolog (200 aa).

The protein belongs to the OPI10 family.

Its subcellular location is the cytoplasm. It localises to the nucleus envelope. The polypeptide is Protein OPI10 homolog (Schizosaccharomyces pombe (strain 972 / ATCC 24843) (Fission yeast)).